The primary structure comprises 591 residues: L-fucose isomerase (591 aa).

Active-site proton acceptor residues include Glu337 and Asp361. Mn(2+) contacts are provided by Glu337, Asp361, and His528.

The protein belongs to the L-fucose isomerase family. As to quaternary structure, homohexamer. Mn(2+) is required as a cofactor.

Its subcellular location is the cytoplasm. It carries out the reaction L-fucose = L-fuculose. It participates in carbohydrate degradation; L-fucose degradation; L-lactaldehyde and glycerone phosphate from L-fucose: step 1/3. Its function is as follows. Converts the aldose L-fucose into the corresponding ketose L-fuculose. In Klebsiella pneumoniae subsp. pneumoniae (strain ATCC 700721 / MGH 78578), this protein is L-fucose isomerase.